A 308-amino-acid polypeptide reads, in one-letter code: Elongation factor Ts (308 aa).

The involved in Mg(2+) ion dislocation from EF-Tu stretch occupies residues 80–83 (TDFV).

It belongs to the EF-Ts family.

It is found in the cytoplasm. Functionally, associates with the EF-Tu.GDP complex and induces the exchange of GDP to GTP. It remains bound to the aminoacyl-tRNA.EF-Tu.GTP complex up to the GTP hydrolysis stage on the ribosome. The chain is Elongation factor Ts from Erythrobacter litoralis (strain HTCC2594).